The sequence spans 110 residues: uncharacterized protein (110 aa).

A run of 3 helical transmembrane segments spans residues 4–26 (LVGGGLMIIAGILIKLFPPKSIN), 46–68 (ANRYSASLMILSGLVIAGMGLLL), and 72–91 (LFILQLILLIAACVITFMLT).

The protein localises to the cell membrane. This is an uncharacterized protein from Bacillus subtilis (strain 168).